The sequence spans 142 residues: Small ribosomal subunit protein uS12 (142 aa).

This sequence belongs to the universal ribosomal protein uS12 family. As to quaternary structure, part of the 30S ribosomal subunit.

Functionally, with S4 and S5 plays an important role in translational accuracy. Located at the interface of the 30S and 50S subunits. The polypeptide is Small ribosomal subunit protein uS12 (Thermoplasma acidophilum (strain ATCC 25905 / DSM 1728 / JCM 9062 / NBRC 15155 / AMRC-C165)).